The primary structure comprises 314 residues: Dihydroorotate dehydrogenase (fumarate) (314 aa).

Substrate-binding positions include Lys46, 70–74, and Asn130; that span reads NSMGL. Residue 46–47 coordinates FMN; the sequence is KS. Residue Asn130 participates in FMN binding. Active-site nucleophile residues include Ser132 and Cys133. Positions 167 and 195 each coordinate FMN. Residue 196-197 coordinates substrate; sequence NS. FMN-binding positions include Gly224, 252-253, and 274-275; these read GG and GT.

This sequence belongs to the dihydroorotate dehydrogenase family. Type 1 subfamily. Homodimer. FMN is required as a cofactor.

The protein localises to the cytoplasm. The enzyme catalyses (S)-dihydroorotate + fumarate = orotate + succinate. It participates in pyrimidine metabolism; UMP biosynthesis via de novo pathway. Its function is as follows. Catalyzes the conversion of dihydroorotate to orotate with fumarate as the electron acceptor. The chain is Dihydroorotate dehydrogenase (fumarate) (URA1) from Saccharomyces mikatae (Yeast).